Consider the following 166-residue polypeptide: Ribonuclease H (166 aa).

Residues 5–147 enclose the RNase H type-1 domain; the sequence is PRKRVALFTD…VDREARRQAQ (143 aa). Positions 14, 52, 74, and 139 each coordinate Mg(2+). A disordered region spans residues 128-166; it reads GHTGHPENERVDREARRQAQSQAKTPCPPQAPTLFHEEA. A compositionally biased stretch (basic and acidic residues) spans 131–144; sequence GHPENERVDREARR.

Belongs to the RNase H family. As to quaternary structure, monomer. The cofactor is Mg(2+).

The protein localises to the cytoplasm. It carries out the reaction Endonucleolytic cleavage to 5'-phosphomonoester.. Endonuclease that specifically degrades the RNA of RNA-DNA hybrids. The chain is Ribonuclease H from Thermus thermophilus (strain ATCC BAA-163 / DSM 7039 / HB27).